The primary structure comprises 234 residues: Meiotically up-regulated gene 35 protein (234 aa).

Residues 126 to 156 (DSSGDLTSTDKERDVSPVSHSEKPYWDRYDL) show a composition bias toward basic and acidic residues. The tract at residues 126 to 176 (DSSGDLTSTDKERDVSPVSHSEKPYWDRYDLDQPSNQDVEESRNLVQEPKH) is disordered. 2 positions are modified to phosphoserine: Ser127 and Ser128. Thr132 is subject to Phosphothreonine. A Phosphoserine modification is found at Ser141.

It is found in the cytoplasm. Functionally, has a role in meiosis. This chain is Meiotically up-regulated gene 35 protein (mug35), found in Schizosaccharomyces pombe (strain 972 / ATCC 24843) (Fission yeast).